Reading from the N-terminus, the 274-residue chain is Diaminopimelate epimerase (274 aa).

Positions 11, 44, and 64 each coordinate substrate. Cysteine 73 acts as the Proton donor in catalysis. Substrate is bound by residues 74–75 (GN), asparagine 157, asparagine 190, and 208–209 (ER). The active-site Proton acceptor is cysteine 217. 218–219 (GS) provides a ligand contact to substrate.

The protein belongs to the diaminopimelate epimerase family. Homodimer.

Its subcellular location is the cytoplasm. It catalyses the reaction (2S,6S)-2,6-diaminopimelate = meso-2,6-diaminopimelate. It participates in amino-acid biosynthesis; L-lysine biosynthesis via DAP pathway; DL-2,6-diaminopimelate from LL-2,6-diaminopimelate: step 1/1. In terms of biological role, catalyzes the stereoinversion of LL-2,6-diaminopimelate (L,L-DAP) to meso-diaminopimelate (meso-DAP), a precursor of L-lysine and an essential component of the bacterial peptidoglycan. This Photorhabdus laumondii subsp. laumondii (strain DSM 15139 / CIP 105565 / TT01) (Photorhabdus luminescens subsp. laumondii) protein is Diaminopimelate epimerase.